The sequence spans 786 residues: Endonuclease MutS2 (786 aa).

Residue 335–342 (GPNTGGKT) participates in ATP binding. The Smr domain maps to 711-786 (LDLRGERFEN…GLGVTVVELK (76 aa)).

This sequence belongs to the DNA mismatch repair MutS family. MutS2 subfamily. As to quaternary structure, homodimer. Binds to stalled ribosomes, contacting rRNA.

In terms of biological role, endonuclease that is involved in the suppression of homologous recombination and thus may have a key role in the control of bacterial genetic diversity. Acts as a ribosome collision sensor, splitting the ribosome into its 2 subunits. Detects stalled/collided 70S ribosomes which it binds and splits by an ATP-hydrolysis driven conformational change. Acts upstream of the ribosome quality control system (RQC), a ribosome-associated complex that mediates the extraction of incompletely synthesized nascent chains from stalled ribosomes and their subsequent degradation. Probably generates substrates for RQC. The sequence is that of Endonuclease MutS2 from Bacillus anthracis (strain A0248).